The sequence spans 269 residues: Bidirectional sugar transporter SWEET1a (269 aa).

The Extracellular segment spans residues 1-6 (MEHIAR). A helical membrane pass occupies residues 7 to 27 (FFFGVSGNVIALFLFLSPVVT). In terms of domain architecture, MtN3/slv 1 spans 8–96 (FFGVSGNVIA…IFLIFAVDRR (89 aa)). Residues 28–42 (FWRIIRKRSTEDFSG) are Cytoplasmic-facing. Residues 43-63 (VPYNMTLLNCLLSAWYGLPFV) traverse the membrane as a helical segment. At 64 to 72 (SPNNILVST) the chain is on the extracellular side. The chain crosses the membrane as a helical span at residues 73–93 (INGTGSVIEAIYVVIFLIFAV). Residues 94–100 (DRRARLR) are Cytoplasmic-facing. A helical membrane pass occupies residues 101–121 (MLGLLSIVVSIFATVVLVSLL). Residues 122-129 (ALHGNARK) are Extracellular-facing. Residues 130–150 (VFCGLAATIFSICMYASPLSI) form a helical membrane-spanning segment. Residues 132–215 (CGLAATIFSI…ILYFIYRKNK (84 aa)) form the MtN3/slv 2 domain. Residues 151–164 (MRLVIKTKSVEYMP) lie on the Cytoplasmic side of the membrane. Residues 165–185 (FLLSLAVFLCGTSWFIYGLLG) form a helical membrane-spanning segment. Residues 186–189 (RDPF) lie on the Extracellular side of the membrane. Residues 190-210 (IIIPNGCGSFLGLVQLILYFI) form a helical membrane-spanning segment. The Cytoplasmic segment spans residues 211–269 (YRKNKGPAVPAGKGEAAAAADVEDAKKVAAAVEMADATTTNKAAADTVVGDGKVVASQV).

The protein belongs to the SWEET sugar transporter family. In terms of assembly, forms homooligomers and/or heterooligomers.

It is found in the cell membrane. Mediates both low-affinity uptake and efflux of sugar across the plasma membrane. The protein is Bidirectional sugar transporter SWEET1a of Sorghum bicolor (Sorghum).